The primary structure comprises 389 residues: Cellobiose 2-epimerase (389 aa).

The protein belongs to the cellobiose 2-epimerase family.

It carries out the reaction D-cellobiose = beta-D-glucosyl-(1-&gt;4)-D-mannopyranose. Catalyzes the reversible epimerization of cellobiose to 4-O-beta-D-glucopyranosyl-D-mannose (Glc-Man). The chain is Cellobiose 2-epimerase from Ruminococcus albus (strain ATCC 27210 / DSM 20455 / JCM 14654 / NCDO 2250 / 7).